The primary structure comprises 153 residues: Lectin-like protein EP153R (153 aa).

Residues 1–30 (MYFKKKYIGLIDKNCEKKILDDSSTIKICY) are Cytoplasmic-facing. A helical membrane pass occupies residues 31 to 51 (ILIGILIGTNMITLIYNFIFW). Over 52–153 (DNYIKCYRNN…YTDLLFICGK (102 aa)) the chain is Extracellular. A disulfide bond links Cys67 and Cys78. Asn83, Asn89, Asn101, Asn107, Asn113, Asn120, Asn127, and Asn143 each carry an N-linked (GlcNAc...) asparagine; by host glycan. Cys97 and Cys151 are oxidised to a cystine.

Belongs to the asfivirus lectin-like protein family. As to quaternary structure, homodimer.

It localises to the host endoplasmic reticulum membrane. Down-regulates MHC-I expression by impairing the appropriate configuration or presentation into the plasma membrane of the latter. Participates in viral hemadsorption, which may help viral spread. Reduces the transactivating activity of host TP53, thus inhibiting apoptosis. Non-essential for virus growth in swine macrophage cell cultures. The protein is Lectin-like protein EP153R of African swine fever virus (strain Badajoz 1971 Vero-adapted) (Ba71V).